A 138-amino-acid chain; its full sequence is Small ribosomal subunit protein uS9 (138 aa).

The protein belongs to the universal ribosomal protein uS9 family.

This is Small ribosomal subunit protein uS9 (rps9) from Sulfolobus acidocaldarius (strain ATCC 33909 / DSM 639 / JCM 8929 / NBRC 15157 / NCIMB 11770).